The following is a 603-amino-acid chain: UvrABC system protein C (603 aa).

One can recognise a GIY-YIG domain in the interval 14–92; sequence ELPGVYRMLD…IKSLAPRYNI (79 aa). The UVR domain occupies 201–236; it reads QEVTRRLTKSMEEASAKLAFEQAAVFRDQIQSLHQV.

This sequence belongs to the UvrC family. In terms of assembly, interacts with UvrB in an incision complex.

It is found in the cytoplasm. Its function is as follows. The UvrABC repair system catalyzes the recognition and processing of DNA lesions. UvrC both incises the 5' and 3' sides of the lesion. The N-terminal half is responsible for the 3' incision and the C-terminal half is responsible for the 5' incision. In Dechloromonas aromatica (strain RCB), this protein is UvrABC system protein C.